We begin with the raw amino-acid sequence, 368 residues long: Aminomethyltransferase (368 aa).

This sequence belongs to the GcvT family. As to quaternary structure, the glycine cleavage system is composed of four proteins: P, T, L and H.

The enzyme catalyses N(6)-[(R)-S(8)-aminomethyldihydrolipoyl]-L-lysyl-[protein] + (6S)-5,6,7,8-tetrahydrofolate = N(6)-[(R)-dihydrolipoyl]-L-lysyl-[protein] + (6R)-5,10-methylene-5,6,7,8-tetrahydrofolate + NH4(+). Functionally, the glycine cleavage system catalyzes the degradation of glycine. This chain is Aminomethyltransferase, found in Xylella fastidiosa (strain M23).